A 122-amino-acid chain; its full sequence is UPF0102 protein CPR_1677 (122 aa).

The protein belongs to the UPF0102 family.

The polypeptide is UPF0102 protein CPR_1677 (Clostridium perfringens (strain SM101 / Type A)).